A 904-amino-acid chain; its full sequence is Protein abrupt (904 aa).

Polar residues predominate over residues 1-15 (MTESTQLQTAENNNA). 2 disordered regions span residues 1–30 (MTESTQLQTAENNNAGVVKMEPPPPATSSV) and 53–72 (GSALSPATPPPSLNLSHQQQ). In terms of domain architecture, BTB spans 103-168 (VDVTLACDER…MYNGEVNVSH (66 aa)). The segment covering 204-238 (SHNSSNNNNNNSSSNNSLSNNNNNNNNNAESSNHN) has biased composition (low complexity). 4 disordered regions span residues 204–287 (SHNS…LNSP), 349–390 (ASSA…PPPQ), 411–438 (LLDREFPVAGQHPLTRNRSGRDTSKDRE), and 451–501 (ALEN…NQRS). Residues 239–253 (KISSYLSPNQTSAAC) are compositionally biased toward polar residues. Low complexity predominate over residues 254–286 (NNSSNSNSNNHSSSHNNSSSNNISGSLNSSLNS). Positions 429-438 (SGRDTSKDRE) are enriched in basic and acidic residues. Residues 452 to 461 (LENSNGQQAN) are compositionally biased toward polar residues. The residue at position 474 (Ser-474) is a Phosphoserine. Residues 481-500 (PSDRGDGQHDGTLDGIDNQR) show a composition bias toward basic and acidic residues. 2 consecutive C2H2-type zinc fingers follow at residues 544–567 (RPCPKCGKIYRSAHTLRTHLEDKH) and 573–596 (YRCVLCGTVAKSRNSLHSHMSRQH). 2 disordered regions span residues 633–696 (ELRA…GGSS) and 832–904 (AAGN…VHNT). The segment covering 642-655 (GGSGSSGGGGGGGS) has biased composition (gly residues). The segment covering 671-682 (DDAEDSDDDPED) has biased composition (acidic residues). Phosphoserine occurs at positions 837, 846, and 868. Residues 851–868 (MGHDEMAENDGDMRREGS) show a composition bias toward basic and acidic residues. A compositionally biased stretch (polar residues) spans 876 to 886 (DNNQSGSNHEV). Residues Ser-889 and Ser-896 each carry the phosphoserine modification.

As to expression, expressed in CNS midline cells during embryonic stages 9-13. Expression also seen in cells of the stomagastric nervous system. Segmentally repeated stripes of ectodermal expression appear at stage 11 that become uniform by stage 12 and throughout embryogenesis. Expressed at variable levels in somatic muscles from stage 16 and in all imaginal disks during larval development. Expression is seen in da neurons that grow in two-dimensional dendrites underneath the epidermis during late embryonic, larval, and pupal stages.

It is found in the nucleus. Its function is as follows. Expression is vital for development; may be involved in transcriptional regulation. In embryos, muscle specific expression is required for segmental nerve b (SNb) motoneuron target recognition within ventral longitudinal muscles. Has a role in establishing and maintaining embryonic muscle attachments, adult sensory cell formation (macrochaetae) and morphogenesis of adult appendages (legs, antenna aristae and male external genitalia). Has a role in the morphogenesis of the class I dendritic neurons: selective expression of ab in class I da neurons plays a pivotal role in forming dendritic arbors, which are characteristic of the class I cells. The development of more complex arbors of class II-IV neurons depends on the absence of ab. The polypeptide is Protein abrupt (ab) (Drosophila melanogaster (Fruit fly)).